We begin with the raw amino-acid sequence, 521 residues long: Medium/long-chain-fatty-acid--[acyl-carrier-protein] ligase MbtM (521 aa).

It belongs to the ATP-dependent AMP-binding enzyme family.

The catalysed reaction is a long-chain fatty acid + holo-[ACP] + ATP = a long-chain fatty acyl-[ACP] + AMP + diphosphate. It catalyses the reaction a medium-chain fatty acid + holo-[ACP] + ATP = a medium-chain fatty acyl-[ACP] + AMP + diphosphate. Its pathway is siderophore biosynthesis; mycobactin biosynthesis. In terms of biological role, activates lipidic moieties required for mycobactin biosynthesis. Converts medium- to long-chain aliphatic fatty acids into acyl adenylate, which is further transferred on to the phosphopantetheine arm of the carrier protein MbtL. This Mycobacterium tuberculosis (strain CDC 1551 / Oshkosh) protein is Medium/long-chain-fatty-acid--[acyl-carrier-protein] ligase MbtM (mbtM).